Here is a 77-residue protein sequence, read N- to C-terminus: U8-lycotoxin-Ls1g (77 aa).

The N-terminal stretch at 1–20 is a signal peptide; the sequence is MKLIIFTGLVLFAIVSLIEV. Positions 21–26 are excised as a propeptide; sequence QADNER.

The protein belongs to the neurotoxin 19 (CSTX) family. 08 (U8-Lctx) subfamily. Contains 4 disulfide bonds. As to expression, expressed by the venom gland.

The protein resides in the secreted. The polypeptide is U8-lycotoxin-Ls1g (Lycosa singoriensis (Wolf spider)).